Here is a 431-residue protein sequence, read N- to C-terminus: Enolase (431 aa).

Q167 serves as a coordination point for (2R)-2-phosphoglycerate. E209 acts as the Proton donor in catalysis. 3 residues coordinate Mg(2+): D246, E289, and D316. (2R)-2-phosphoglycerate is bound by residues K341, R370, S371, and K392. K341 serves as the catalytic Proton acceptor.

The protein belongs to the enolase family. In terms of assembly, component of the RNA degradosome, a multiprotein complex involved in RNA processing and mRNA degradation. Requires Mg(2+) as cofactor.

The protein resides in the cytoplasm. The protein localises to the secreted. It is found in the cell surface. The enzyme catalyses (2R)-2-phosphoglycerate = phosphoenolpyruvate + H2O. The protein operates within carbohydrate degradation; glycolysis; pyruvate from D-glyceraldehyde 3-phosphate: step 4/5. Its function is as follows. Catalyzes the reversible conversion of 2-phosphoglycerate (2-PG) into phosphoenolpyruvate (PEP). It is essential for the degradation of carbohydrates via glycolysis. In Shewanella halifaxensis (strain HAW-EB4), this protein is Enolase.